The chain runs to 350 residues: Glycerol-1-phosphate dehydrogenase [NAD(P)+] (350 aa).

Residues G96–D100 and T118–S121 contribute to the NAD(+) site. A substrate-binding site is contributed by D123. S127 contributes to the NAD(+) binding site. A substrate-binding site is contributed by D170. D170 and H250 together coordinate Zn(2+). H254 is a binding site for substrate. H266 contributes to the Zn(2+) binding site.

Belongs to the glycerol-1-phosphate dehydrogenase family. Homodimer. Requires Zn(2+) as cofactor.

The protein localises to the cytoplasm. It catalyses the reaction sn-glycerol 1-phosphate + NAD(+) = dihydroxyacetone phosphate + NADH + H(+). The enzyme catalyses sn-glycerol 1-phosphate + NADP(+) = dihydroxyacetone phosphate + NADPH + H(+). It participates in membrane lipid metabolism; glycerophospholipid metabolism. Functionally, catalyzes the NAD(P)H-dependent reduction of dihydroxyacetonephosphate (DHAP or glycerone phosphate) to glycerol 1-phosphate (G1P). The G1P thus generated is used as the glycerophosphate backbone of phospholipids in the cellular membranes of Archaea. The polypeptide is Glycerol-1-phosphate dehydrogenase [NAD(P)+] (Sulfurisphaera tokodaii (strain DSM 16993 / JCM 10545 / NBRC 100140 / 7) (Sulfolobus tokodaii)).